The primary structure comprises 422 residues: Phagosome assembly factor 1 (422 aa).

The protein belongs to the PHAF1 family. As to quaternary structure, interacts with BCAS3; the interaction is requrired for the association with the phagophore.

The protein resides in the cytoplasm. It is found in the preautophagosomal structure. In terms of biological role, plays a regulatory role in autophagic activity. In complex with BCAS3, associates with the autophagosome formation site during both non-selective and selective autophagy. The polypeptide is Phagosome assembly factor 1 (Mus musculus (Mouse)).